Here is a 357-residue protein sequence, read N- to C-terminus: Malonyl CoA reductase (NADP) (357 aa).

13–16 (TGLV) serves as a coordination point for NADP(+). The Acyl-thioester intermediate role is filled by Cys150. Residue 180–181 (SG) coordinates NADP(+). His245 (proton acceptor) is an active-site residue. An NADP(+)-binding site is contributed by 332–333 (NT).

It belongs to the aspartate-semialdehyde dehydrogenase family. As to quaternary structure, homotetramer.

The enzyme catalyses 3-oxopropanoate + NADP(+) + CoA = malonyl-CoA + NADPH + H(+). Its function is as follows. Catalyzes the reduction of malonyl-CoA to malonate semialdehyde, a key step in the 3-hydroxypropanoate and the 3-hydroxypropanoate/4-hydroxybutyrate cycles. The sequence is that of Malonyl CoA reductase (NADP) from Metallosphaera sedula (strain ATCC 51363 / DSM 5348 / JCM 9185 / NBRC 15509 / TH2).